A 577-amino-acid polypeptide reads, in one-letter code: Phosphoethanolamine transferase EptC (577 aa).

5 helical membrane-spanning segments follow: residues 17–37 (LGWA…IIYI), 44–64 (NGIR…FLFP), 69–89 (IIAA…LCYY), 119–139 (YFSL…VLLW), and 154–174 (VVSF…NTFI).

This sequence belongs to the phosphoethanolamine transferase family. EptC/CptA subfamily.

It localises to the cell inner membrane. It participates in bacterial outer membrane biogenesis; LPS core biosynthesis. Catalyzes the addition of a phosphoethanolamine moiety to the outer membrane lipopolysaccharide core. Plays a role in the pathogenesis of E.coli meningitis. Required for invasion of E.coli K1 into brain microvascular endothelial cells (BMEC). Contributes to E.coli traversal across the blood-brain barrier. This is Phosphoethanolamine transferase EptC (eptC) from Escherichia coli O18:K1:H7 (strain RS218 / NMEC).